A 268-amino-acid polypeptide reads, in one-letter code: Undecaprenyl-diphosphatase (268 aa).

The next 8 membrane-spanning stretches (helical) occupy residues 8 to 28 (VILGIIEGVTEFLPVSSTGHL), 41 to 61 (AFWDSFTVLIQLGAILAIVGL), 83 to 103 (FVIGVLVAFLPAVVVGLVAGK), 108 to 128 (VLFNPWVVCFTLIVGGAILLW), 144 to 164 (FPLLMYLYIGIAQCVAMIPGV), 184 to 204 (AAEFSFFLAIPTMIGAFAYDF), 218 to 238 (IVAIGFVVSFITAVIVVKTFL), and 246 to 266 (FVVFAWWRVIVGTLGLIALAL).

This sequence belongs to the UppP family.

It localises to the cell inner membrane. It carries out the reaction di-trans,octa-cis-undecaprenyl diphosphate + H2O = di-trans,octa-cis-undecaprenyl phosphate + phosphate + H(+). Catalyzes the dephosphorylation of undecaprenyl diphosphate (UPP). Confers resistance to bacitracin. This chain is Undecaprenyl-diphosphatase, found in Bradyrhizobium diazoefficiens (strain JCM 10833 / BCRC 13528 / IAM 13628 / NBRC 14792 / USDA 110).